The chain runs to 907 residues: Clumping factor B (907 aa).

The signal sequence occupies residues Met-1–Ala-44. The short motif at Tyr-15–Ser-26 is the YSIRK-G/S signaling motif element. Composition is skewed to polar residues over residues Ala-44–Ala-61 and Met-68–Ser-101. Residues Ala-44 to Arg-191 are disordered. Residues Ser-45–Asn-542 are ligand binding A region. Residues Thr-102–Pro-119 are compositionally biased toward low complexity. Residues Gln-134 to Ser-189 show a composition bias toward polar residues. An MIDAS-like motif motif is present at residues Asp-272 to Ser-276. The segment at Tyr-530–Asn-879 is disordered. Residues Asp-545–Glu-555 are compositionally biased toward pro residues. The span at Pro-556–Asp-831 shows a compositional bias: acidic residues. Residues Arg-835 to Pro-846 are compositionally biased toward polar residues. A compositionally biased stretch (basic and acidic residues) spans His-863–Glu-876. The short motif at Leu-868–Gly-872 is the LPXTG sorting signal element. Thr-871 is subject to Pentaglycyl murein peptidoglycan amidated threonine. Positions Gly-872 to Ala-907 are cleaved as a propeptide — removed by sortase.

Belongs to the serine-aspartate repeat-containing protein (SDr) family. Post-translationally, proteolytically cleaved by aureolysin (aur). This cleavage leads to the inactivation of ClfB.

Its subcellular location is the secreted. The protein resides in the cell wall. Its function is as follows. Cell surface-associated protein implicated in virulence by promoting bacterial attachment to both alpha- and beta-chains of human fibrinogen and inducing the formation of bacterial clumps. The sequence is that of Clumping factor B (clfB) from Staphylococcus aureus (strain MW2).